Reading from the N-terminus, the 143-residue chain is SsrA-binding protein (143 aa).

This sequence belongs to the SmpB family.

It is found in the cytoplasm. Its function is as follows. Required for rescue of stalled ribosomes mediated by trans-translation. Binds to transfer-messenger RNA (tmRNA), required for stable association of tmRNA with ribosomes. tmRNA and SmpB together mimic tRNA shape, replacing the anticodon stem-loop with SmpB. tmRNA is encoded by the ssrA gene; the 2 termini fold to resemble tRNA(Ala) and it encodes a 'tag peptide', a short internal open reading frame. During trans-translation Ala-aminoacylated tmRNA acts like a tRNA, entering the A-site of stalled ribosomes, displacing the stalled mRNA. The ribosome then switches to translate the ORF on the tmRNA; the nascent peptide is terminated with the 'tag peptide' encoded by the tmRNA and targeted for degradation. The ribosome is freed to recommence translation, which seems to be the essential function of trans-translation. The chain is SsrA-binding protein from Mycoplasmoides gallisepticum (strain R(low / passage 15 / clone 2)) (Mycoplasma gallisepticum).